The sequence spans 674 residues: Probable copper-transporting P-type ATPase B (674 aa).

The tract at residues methionine 1 to alanine 22 is disordered. Positions methionine 7–asparagine 16 are enriched in basic and acidic residues. The next 6 helical transmembrane spans lie at phenylalanine 32 to asparagine 52, phenylalanine 57 to glycine 77, glycine 95 to phenylalanine 115, threonine 127 to isoleucine 147, glycine 284 to isoleucine 304, and leucine 315 to threonine 335. Aspartate 367 (4-aspartylphosphate intermediate) is an active-site residue. Positions 565 and 569 each coordinate Mg(2+). The next 2 membrane-spanning stretches (helical) occupy residues leucine 623–glycine 645 and serine 649–leucine 671.

This sequence belongs to the cation transport ATPase (P-type) (TC 3.A.3) family. Type IB subfamily.

The protein resides in the cell membrane. The enzyme catalyses Cu(+)(in) + ATP + H2O = Cu(+)(out) + ADP + phosphate + H(+). Involved in copper transport. The sequence is that of Probable copper-transporting P-type ATPase B (copB) from Staphylococcus epidermidis (strain ATCC 35984 / DSM 28319 / BCRC 17069 / CCUG 31568 / BM 3577 / RP62A).